Consider the following 541-residue polypeptide: Glucose-6-phosphate isomerase (541 aa).

The Proton donor role is filled by glutamate 347. Residues histidine 378 and lysine 506 contribute to the active site.

It belongs to the GPI family.

It is found in the cytoplasm. It catalyses the reaction alpha-D-glucose 6-phosphate = beta-D-fructose 6-phosphate. It functions in the pathway carbohydrate biosynthesis; gluconeogenesis. The protein operates within carbohydrate degradation; glycolysis; D-glyceraldehyde 3-phosphate and glycerone phosphate from D-glucose: step 2/4. Its function is as follows. Catalyzes the reversible isomerization of glucose-6-phosphate to fructose-6-phosphate. The polypeptide is Glucose-6-phosphate isomerase (Francisella tularensis subsp. holarctica (strain OSU18)).